A 456-amino-acid polypeptide reads, in one-letter code: Cysteine--tRNA ligase (456 aa).

Cys-29 is a Zn(2+) binding site. Positions 31–41 match the 'HIGH' region motif; the sequence is VTVYDYCHVGH. Residues Cys-210, His-235, and Glu-239 each coordinate Zn(2+). The short motif at 267–271 is the 'KMSKS' region element; it reads KMSKS. Lys-270 contributes to the ATP binding site.

The protein belongs to the class-I aminoacyl-tRNA synthetase family. Monomer. Requires Zn(2+) as cofactor.

The protein localises to the cytoplasm. The enzyme catalyses tRNA(Cys) + L-cysteine + ATP = L-cysteinyl-tRNA(Cys) + AMP + diphosphate. This Hydrogenovibrio crunogenus (strain DSM 25203 / XCL-2) (Thiomicrospira crunogena) protein is Cysteine--tRNA ligase.